A 151-amino-acid chain; its full sequence is Phosphoribosyl-AMP cyclohydrolase (151 aa).

Residue Asp94 participates in Mg(2+) binding. A Zn(2+)-binding site is contributed by Cys95. Mg(2+)-binding residues include Asp96 and Asp98. Zn(2+) contacts are provided by Cys112 and Cys119.

It belongs to the PRA-CH family. In terms of assembly, homodimer. Requires Mg(2+) as cofactor. It depends on Zn(2+) as a cofactor.

The protein resides in the cytoplasm. It carries out the reaction 1-(5-phospho-beta-D-ribosyl)-5'-AMP + H2O = 1-(5-phospho-beta-D-ribosyl)-5-[(5-phospho-beta-D-ribosylamino)methylideneamino]imidazole-4-carboxamide. It functions in the pathway amino-acid biosynthesis; L-histidine biosynthesis; L-histidine from 5-phospho-alpha-D-ribose 1-diphosphate: step 3/9. Its function is as follows. Catalyzes the hydrolysis of the adenine ring of phosphoribosyl-AMP. The chain is Phosphoribosyl-AMP cyclohydrolase from Rhodopseudomonas palustris (strain TIE-1).